A 313-amino-acid polypeptide reads, in one-letter code: Glutathione synthetase (313 aa).

Residues 125 to 309 (KLFVMDFTEL…IAAKIWDVIE (185 aa)) form the ATP-grasp domain. 151-207 (RAEHGAVVMKPLHGHGGAAVFRVLPQDINFGSLYDMFAVTFREPWVIQRFLPEVKHG) provides a ligand contact to ATP. 2 residues coordinate Mg(2+): glutamate 280 and asparagine 282.

It belongs to the prokaryotic GSH synthase family. Mg(2+) is required as a cofactor. The cofactor is Mn(2+).

It catalyses the reaction gamma-L-glutamyl-L-cysteine + glycine + ATP = glutathione + ADP + phosphate + H(+). It participates in sulfur metabolism; glutathione biosynthesis; glutathione from L-cysteine and L-glutamate: step 2/2. The chain is Glutathione synthetase from Rhodopseudomonas palustris (strain ATCC BAA-98 / CGA009).